Reading from the N-terminus, the 474-residue chain is tRNA-2-methylthio-N(6)-dimethylallyladenosine synthase (474 aa).

The region spanning 3-120 is the MTTase N-terminal domain; that stretch reads KKLHIKTWGC…LPEMINSVRG (118 aa). 6 residues coordinate [4Fe-4S] cluster: Cys-12, Cys-49, Cys-83, Cys-157, Cys-161, and Cys-164. Residues 143 to 375 form the Radical SAM core domain; that stretch reads RADGPTAFVS…QDRINQQTTA (233 aa). Residues 378–441 enclose the TRAM domain; the sequence is RRKLGTVQRI…ANSLRGMLLR (64 aa).

The protein belongs to the methylthiotransferase family. MiaB subfamily. As to quaternary structure, monomer. It depends on [4Fe-4S] cluster as a cofactor.

Its subcellular location is the cytoplasm. The enzyme catalyses N(6)-dimethylallyladenosine(37) in tRNA + (sulfur carrier)-SH + AH2 + 2 S-adenosyl-L-methionine = 2-methylsulfanyl-N(6)-dimethylallyladenosine(37) in tRNA + (sulfur carrier)-H + 5'-deoxyadenosine + L-methionine + A + S-adenosyl-L-homocysteine + 2 H(+). Catalyzes the methylthiolation of N6-(dimethylallyl)adenosine (i(6)A), leading to the formation of 2-methylthio-N6-(dimethylallyl)adenosine (ms(2)i(6)A) at position 37 in tRNAs that read codons beginning with uridine. This Erwinia tasmaniensis (strain DSM 17950 / CFBP 7177 / CIP 109463 / NCPPB 4357 / Et1/99) protein is tRNA-2-methylthio-N(6)-dimethylallyladenosine synthase.